The following is a 122-amino-acid chain: Small ribosomal subunit protein uS13 (122 aa).

The segment at 99–122 (RGQRTHTNARTRKGPAKAIAGKKK) is disordered.

The protein belongs to the universal ribosomal protein uS13 family. In terms of assembly, part of the 30S ribosomal subunit. Forms a loose heterodimer with protein S19. Forms two bridges to the 50S subunit in the 70S ribosome.

In terms of biological role, located at the top of the head of the 30S subunit, it contacts several helices of the 16S rRNA. In the 70S ribosome it contacts the 23S rRNA (bridge B1a) and protein L5 of the 50S subunit (bridge B1b), connecting the 2 subunits; these bridges are implicated in subunit movement. Contacts the tRNAs in the A and P-sites. This is Small ribosomal subunit protein uS13 from Cereibacter sphaeroides (strain ATCC 17025 / ATH 2.4.3) (Rhodobacter sphaeroides).